The primary structure comprises 136 residues: Transmembrane protein 203 (136 aa).

The next 4 membrane-spanning stretches (helical) occupy residues 14–34 (FAQL…VLLA), 50–72 (FIPF…VRLF), 81–101 (VLRL…EMLL), and 112–132 (LWFG…MIRA).

Its subcellular location is the endoplasmic reticulum membrane. It is found in the endoplasmic reticulum-Golgi intermediate compartment. Functionally, involved in the regulation of cellular calcium homeotasis. May act as a regulator of STING-mediated inflammatory signaling in macrophages. The sequence is that of Transmembrane protein 203 (tmem203) from Xenopus tropicalis (Western clawed frog).